Consider the following 455-residue polypeptide: Chromosomal replication initiator protein DnaA (455 aa).

Residues 1–73 (MTISPQYIWN…LEEVETIVGY (73 aa)) are domain I, interacts with DnaA modulators. A domain II region spans residues 73 to 114 (YPIAVKLTTSQEQNLRIVDKNKDNLSSTKLQNKRQQESPKLN). The tract at residues 115–331 (QLNPRYNFSR…GALIRAVTYI (217 aa)) is domain III, AAA+ region. ATP-binding residues include G159, G161, K162, and T163. Residues 332–455 (SISGLSMTVE…RINIASRNQN (124 aa)) form a domain IV, binds dsDNA region.

Belongs to the DnaA family. In terms of assembly, oligomerizes as a right-handed, spiral filament on DNA at oriC.

It is found in the cytoplasm. In terms of biological role, plays an essential role in the initiation and regulation of chromosomal replication. ATP-DnaA binds to the origin of replication (oriC) to initiate formation of the DNA replication initiation complex once per cell cycle. Binds the DnaA box (a 9 base pair repeat at the origin) and separates the double-stranded (ds)DNA. Forms a right-handed helical filament on oriC DNA; dsDNA binds to the exterior of the filament while single-stranded (ss)DNA is stabiized in the filament's interior. The ATP-DnaA-oriC complex binds and stabilizes one strand of the AT-rich DNA unwinding element (DUE), permitting loading of DNA polymerase. After initiation quickly degrades to an ADP-DnaA complex that is not apt for DNA replication. Binds acidic phospholipids. This chain is Chromosomal replication initiator protein DnaA, found in Crocosphaera subtropica (strain ATCC 51142 / BH68) (Cyanothece sp. (strain ATCC 51142)).